The following is a 349-amino-acid chain: UDP-galactose/UDP-glucose transporter 4 (349 aa).

8 helical membrane-spanning segments follow: residues 23-43 (WQQFLICSSGFFFGYLVNGIC), 56-76 (GWYFTFAQGLVYIALIYMYGF), 115-135 (IMFKSTKVLPVMVMGAFIPGL), 140-160 (PVHEYISAMLLVIGLILFTLA), 167-187 (NFSIIGVMMISGALIMDAFLG), 205-225 (MLFCSTVVGLPFLLAPMILTG), 248-268 (AMATFIGQVSVLSLIALFGAA), and 293-313 (LTEQHGTGLLLIFMGIILKMV). Positions 316 to 349 (PNPNPKSSGSGQTPGKLERVKFEKEDDEESRPLV) are disordered. Residues 340 to 349 (EDDEESRPLV) are compositionally biased toward acidic residues.

Belongs to the nucleotide-sugar transporter family. UDP-galactose:UMP antiporter (TC 2.A.7.11) subfamily.

The protein localises to the membrane. Functionally, sugar transporter involved in the transport of nucleotide-sugars from cytoplasm into the Golgi and/or the endoplasmic reticulum. The protein is UDP-galactose/UDP-glucose transporter 4 of Arabidopsis thaliana (Mouse-ear cress).